The following is a 142-amino-acid chain: Putative tyrosine phosphatase 123R (142 aa).

The Tyrosine-protein phosphatase domain maps to 2-137 (EPTKIVENLY…LAQFERWLNS (136 aa)). Cys-81 serves as the catalytic Phosphocysteine intermediate.

This sequence belongs to the protein-tyrosine phosphatase family.

The protein is Putative tyrosine phosphatase 123R of Invertebrate iridescent virus 6 (IIV-6).